A 118-amino-acid chain; its full sequence is Large ribosomal subunit protein bL17 (118 aa).

It belongs to the bacterial ribosomal protein bL17 family. As to quaternary structure, part of the 50S ribosomal subunit. Contacts protein L32.

This Campylobacter hominis (strain ATCC BAA-381 / DSM 21671 / CCUG 45161 / LMG 19568 / NCTC 13146 / CH001A) protein is Large ribosomal subunit protein bL17.